The following is a 360-amino-acid chain: Hereditary hemochromatosis protein homolog (360 aa).

An N-terminal signal peptide occupies residues 1 to 25 (MDRSAGLPVRLLLLLLLLLLWSVAP). The interval 26 to 127 (QALRPGSHSL…KVTKLRVVPE (102 aa)) is alpha-1. Over 26 to 319 (QALRPGSHSL…WEPSRSQDMI (294 aa)) the chain is Extracellular. N-linked (GlcNAc...) asparagine glycosylation is found at Asn-115, Asn-143, Asn-167, and Asn-247. Positions 128–218 (SHILQVILGC…ELQRGVLGQQ (91 aa)) are alpha-2. 2 disulfides stabilise this stretch: Cys-137–Cys-200 and Cys-238–Cys-295. An alpha-3 region spans residues 219 to 310 (VPTLVKVTRH…GLDQPLTATW (92 aa)). The 90-residue stretch at 220-309 (PTLVKVTRHW…PGLDQPLTAT (90 aa)) folds into the Ig-like C1-type domain. The tract at residues 311-319 (EPSRSQDMI) is connecting peptide. Residues 320–340 (IGIISGITICAIFFVGILILV) traverse the membrane as a helical segment. The Cytoplasmic segment spans residues 341–360 (LRKRKVSGGTMGDYVLTECE).

Belongs to the MHC class I family. As to quaternary structure, binds TFR through the extracellular domain in a pH-dependent manner.

The protein localises to the cell membrane. In terms of biological role, binds to transferrin receptor (TFR) and reduces its affinity for iron-loaded transferrin. This chain is Hereditary hemochromatosis protein homolog (Hfe), found in Rattus norvegicus (Rat).